The following is a 169-amino-acid chain: Glycine-rich RNA-binding protein 10 (169 aa).

An RRM domain is found at 6–84; it reads YRCFVGGLAW…RTITVNEAQS (79 aa). Disordered regions lie at residues 80–101 and 121–169; these read NEAQ…YGGR and GYGS…GGGW. Residues 85–101 are compositionally biased toward gly residues; the sequence is RGGGGGGGRGGGGYGGR.

As to expression, expressed only in roots and stems.

Possibly has a role in RNA transcription or processing during stress. The protein is Glycine-rich RNA-binding protein 10 (GRP10) of Brassica napus (Rape).